The sequence spans 392 residues: Phosphoglycerate kinase (392 aa).

Substrate is bound by residues 21 to 23 (DFN), R36, 59 to 62 (HLGR), R113, and R146. Residues K197, E319, and 345–348 (GGDT) each bind ATP.

The protein belongs to the phosphoglycerate kinase family. Monomer.

Its subcellular location is the cytoplasm. The enzyme catalyses (2R)-3-phosphoglycerate + ATP = (2R)-3-phospho-glyceroyl phosphate + ADP. The protein operates within carbohydrate degradation; glycolysis; pyruvate from D-glyceraldehyde 3-phosphate: step 2/5. The sequence is that of Phosphoglycerate kinase from Francisella tularensis subsp. holarctica (strain FTNF002-00 / FTA).